Reading from the N-terminus, the 350-residue chain is Probable poly-beta-1,6-N-acetyl-D-glucosamine export protein (350 aa).

Helical transmembrane passes span 7-29 (ELVYLRAIICAIIIVTHLLTQIT), 44-66 (FYIRNIVIFGTPCFIILSQLLTT), 79-101 (TRVKYILIPYILMGLFYSYSESL), 116-138 (LLGQWYGYFIVVIMQFFILSYII), 145-167 (LFNSKILLLLSFILQQSFLYYFT), 187-204 (IIFGWIFYFFLGAYMGYN), 211-233 (FLERYLVIMIVLAVATYFVFIAL), 243-262 (SFSYSLTPYNSIMFIVILGI), 269-291 (MLFNTIQMISAFSFFIYLLHPII), and 306-328 (TMVFLAISLLFILGLCIGVGMIL).

It belongs to the acyltransferase 3 family.

The protein localises to the cell membrane. Its function is as follows. Presumably involved in the export of the biofilm adhesin polysaccharide poly-beta-1,6-N-acetyl-D-glucosamine (PNAG, also referred to as PIA) across the cell membrane. This Staphylococcus aureus (strain MRSA252) protein is Probable poly-beta-1,6-N-acetyl-D-glucosamine export protein (icaC).